We begin with the raw amino-acid sequence, 397 residues long: Efflux pump periplasmic linker BepD (397 aa).

The N-terminal stretch at 1 to 26 (MTLNRTIRCFAAGAAFIVFAAQPALA) is a signal peptide. Residues 98–139 (APYQAELEKAQAQVAQAEAQYQQSIRDAERAEQLVQQKVQSA) adopt a coiled-coil conformation.

This sequence belongs to the membrane fusion protein (MFP) (TC 8.A.1) family. As to quaternary structure, probably part of a tripartite efflux pump, which is composed of an outer membrane efflux protein, an inner membrane protein and a protein that expands the periplasmic space. Could form a tripartite pump with BepC and BepE.

Its subcellular location is the periplasm. Functionally, involved in resistance to several unrelated toxic compounds, such as dyes, detergents and antibiotics. In Brucella suis biovar 1 (strain 1330), this protein is Efflux pump periplasmic linker BepD (bepD).